The chain runs to 449 residues: tRNA modification GTPase MnmE (449 aa).

Arg-24, Glu-81, and Lys-121 together coordinate (6S)-5-formyl-5,6,7,8-tetrahydrofolate. The TrmE-type G domain occupies 218–375; the sequence is GLVVAITGPP…LIAALGKFAA (158 aa). GTP is bound by residues 228-233, 247-253, and 272-275; these read NVGKST, SPHAGTT, and DTAG. Residues Ser-232 and Thr-253 each contribute to the Mg(2+) site. Residue Lys-449 coordinates (6S)-5-formyl-5,6,7,8-tetrahydrofolate.

This sequence belongs to the TRAFAC class TrmE-Era-EngA-EngB-Septin-like GTPase superfamily. TrmE GTPase family. Homodimer. Heterotetramer of two MnmE and two MnmG subunits. Requires K(+) as cofactor.

It is found in the cytoplasm. Exhibits a very high intrinsic GTPase hydrolysis rate. Involved in the addition of a carboxymethylaminomethyl (cmnm) group at the wobble position (U34) of certain tRNAs, forming tRNA-cmnm(5)s(2)U34. This chain is tRNA modification GTPase MnmE, found in Rhodopseudomonas palustris (strain BisB18).